Here is a 392-residue protein sequence, read N- to C-terminus: Pannexin-3 (392 aa).

Residues 1–39 (MSLAHTAAEYMLSDALLPDRRGSRLKGLRLELPLDKMVK) are Cytoplasmic-facing. Residues 40 to 60 (FITVGFPLLLMSLAFAQEFSS) form a helical membrane-spanning segment. Residues 61–113 (GSPISCFSPSNFSVRQAAYVDSSCWDSLAHHTQDKAGQYKVKSLWPHKALPYS) are Extracellular-facing. Asparagine 71 carries N-linked (GlcNAc...) asparagine glycosylation. The helical transmembrane segment at 114-134 (LLALAVAMYLPVLLWQYVAVP) threads the bilayer. Topologically, residues 135-215 (SLSSDLLFII…VATYLLRNAL (81 aa)) are cytoplasmic. The chain crosses the membrane as a helical span at residues 216–236 (LLLFTSATYLYLGQFHLDVFF). Topologically, residues 237 to 267 (QDEFNCFIKTGLLHDETHVPELITCRLTSLS) are extracellular. The helical transmembrane segment at 268–288 (VFQIVSVSSAAIYTILVPVII) threads the bilayer. The Cytoplasmic segment spans residues 289–392 (YNLTRLCRWD…LTQHTYDEHA (104 aa)).

It belongs to the pannexin family. Homoheptameric. N-glycosylation may play a role in cell surface targeting. In terms of tissue distribution, expressed in skin, cartilage, heart, lung, liver, spleen, thymus and kidney. Not expressed in brain. Expressed in calvarial cells.

Its subcellular location is the cell membrane. It is found in the endoplasmic reticulum membrane. The enzyme catalyses Ca(2+)(in) = Ca(2+)(out). It catalyses the reaction ATP(in) = ATP(out). Its function is as follows. Regulator of osteoblast differentiation by functionning as a Ca(2+) channel in the endoplasmic reticulum which regulates calmodulin (CaM) pathways. Allows ATP release into the extracellular space and activation or purinergic receptors. This chain is Pannexin-3 (Panx3), found in Mus musculus (Mouse).